Here is a 352-residue protein sequence, read N- to C-terminus: Nicotinate-nucleotide--dimethylbenzimidazole phosphoribosyltransferase (352 aa).

The active-site Proton acceptor is E316.

The protein belongs to the CobT family.

The enzyme catalyses 5,6-dimethylbenzimidazole + nicotinate beta-D-ribonucleotide = alpha-ribazole 5'-phosphate + nicotinate + H(+). Its pathway is nucleoside biosynthesis; alpha-ribazole biosynthesis; alpha-ribazole from 5,6-dimethylbenzimidazole: step 1/2. Its function is as follows. Catalyzes the synthesis of alpha-ribazole-5'-phosphate from nicotinate mononucleotide (NAMN) and 5,6-dimethylbenzimidazole (DMB). The polypeptide is Nicotinate-nucleotide--dimethylbenzimidazole phosphoribosyltransferase (Ruminiclostridium cellulolyticum (strain ATCC 35319 / DSM 5812 / JCM 6584 / H10) (Clostridium cellulolyticum)).